The following is a 236-amino-acid chain: uncharacterized protein (236 aa).

3 disordered regions span residues 1 to 48, 67 to 122, and 134 to 192; these read MHLR…RTFS, VHTP…HSPR, and KLHP…PNNT. Over residues 85–99 the composition is skewed to basic residues; that stretch reads RAHRTAKHPARRQSC. The span at 180-189 shows a compositional bias: pro residues; that stretch reads PSPAIKPSPP.

This is an uncharacterized protein from Encephalitozoon cuniculi (strain GB-M1) (Microsporidian parasite).